A 1567-amino-acid chain; its full sequence is MIVEKILALRTCANNMADHCGLIWPMAGPVECKFWKPSGLHENGLTGLLWGKGVGAHLSAHADARWVVCEVAVDEMLQLAEEGMIKFPRATVLFVGNRSQALDYIAANMPLYGAALQLAAPAAPAHVHMPAAEPSAPATQATSATLPTPATPSTQATPSTQSTQSTQSTEATQSTEATPVATVAAAPPPPGQQHDVMAKKTETGVYGSTLTGADQSRLVAGYGSTETAGDHSDLIAGYGSTGTAGSDSSILAGYGSTQTAAGRSTLTAGYGSTQTAQEGSRLTSGYGSTATSGSDSAVISGYGSTQTAGSESSLTAGYGSTQTARKGSDITAGYGSTGTAGSDSALIAGYGSTQTAGSESSLTAGYGSTQTARKGSDVTAGYGSTGTAGADSTLIAGYGSTQTAGGESSLTAGYGSTQTARQGSDITAGYGSTGTAGADSTLIAGYGSTQTSGSDSSLTAGYGSTQTARKGSDITAGYGSTGTAGSDSSLIAGYGSTQTAGSESSLTAGYGSTQTAQQDSSLTTGYGSTSTAGHDSSLIAGYGSTQTAGYDSTLTAGYGSTQTAQQDSSLTTGYGSTSTAGADSTLIAGYGSTQTAGSDSSLTAGYGSTQTAREGSDVTAGYGSTGTAGADSTLIAGYGSTQTSGSDSSLTAGYGSTQTARKGSDVTAGYGSTGTAGADSTLIAGYGSTQTSGSDSSLTAGYGSTQTARKGSDVTAGYGSTGTAGADSTLIAGYGSTQTSGSDSSLTAGYGSTQTARKGSDVTAGYGSTGTAGADSTLIAGYGSTQTSGSDSSLTAGYGSTQTARKGSDITAGYGSTGTAGADSTLIAGYGSTQTSGSDSSLTAGYGSTQTAREGSDVTAGYGSTGTAGADSTLISGYGSTQTAGSDSSLTAGYGSTQTARKGSDVTAGYGSTGTAGADSTLIAGYGSTQTSGSDSSLTAGYGSTQTARKGSDMTAGYGSTGTAGADSTLIAGYGSTQTSGSDSSLTAGYGSTQTAREGSDVTAGYGSTGTAGADSTLIAGYGSTQTAGSDSSLTAGYGSTQTARQGSDVTAGYGSTGTAGADSTLIAGYGSTQTAGSDSSLTAGYGSTQTARQGSDITAGYGSTGTAGADSSLIAGYGSTQTAGYDSNLTAGYGSTQTAREDSSLTAGYGSTSTAGHDSSLIAGYGSTQTAGYNSILTTGYGSTQTAQESSSLTAGYGSTSTAGYDSTLTAGYGSTQTAGYKSTLTAGYGSNSTAGHESSLIAGYGSTQIAGYESTLTAGYGSSLTTQQNSSLTAGYGSTEIAGYASTLMAGYGSSQTAGYESTLTAGYGSTQMAEHSSSLTAGYGSTGIAGQDSSLIAGYGSSLTSGVRSFLTAGYGSNMIASYGSSLIAGHECTQIAGHKSMLIAGKGSFQTAGARSTLIGGAASVQTAGDRSKLIAGADSTQTAGDRSKLLAGRNSYLTAGDRSKLTAGDDSTLMAGDRSKLTAGKNSVLTAGANSRLIGSLGSTLSGGENSTLIFRCWDGERYTNLVVRTGEQGVESDIPYQVDDEGNLVGKADDDLVLDYDPGMILDGQCSPGTGEELRDV.

The segment covering 130 to 185 (PAAEPSAPATQATSATLPTPATPSTQATPSTQSTQSTQSTEATQSTEATPVATVAA) has biased composition (low complexity). Disordered stretches follow at residues 130–195 (PAAE…QQHD), 270–329 (YGST…KGSD), 356–378 (AGSE…GSDV), 449–474 (TQTS…GSDI), 502–529 (SESS…YGST), 594–620 (QTAG…DVTA), 642–668 (QTSG…DVTA), 689–716 (TQTS…DVTA), 738–764 (QTSG…DVTA), 785–810 (TQTS…GSDI), 833–860 (TQTS…DVTA), 929–959 (TQTS…AGYG), and 977–1004 (TQTS…DVTA). Over residues 270 to 282 (YGSTQTAQEGSRL) the composition is skewed to polar residues. Residues 283–296 (TSGYGSTATSGSDS) show a composition bias toward low complexity. Polar residues-rich tracts occupy residues 302-325 (YGST…QTAR), 356-373 (AGSE…QTAR), 449-469 (TQTS…QTAR), and 502-519 (SESS…AQQD). Over residues 520–529 (SSLTTGYGST) the composition is skewed to low complexity. Polar residues-rich tracts occupy residues 594 to 613 (QTAG…QTAR), 642 to 661 (QTSG…QTAR), 689 to 709 (TQTS…QTAR), 738 to 757 (QTSG…QTAR), 785 to 805 (TQTS…QTAR), 833 to 853 (TQTS…QTAR), 929 to 949 (TQTS…QTAR), and 977 to 997 (TQTS…QTAR).

Belongs to the bacterial ice nucleation protein family.

It localises to the cell outer membrane. Ice nucleation proteins enable bacteria to nucleate crystallization in supercooled water. This Xanthomonas campestris pv. translucens protein is Ice nucleation protein (inaX).